The primary structure comprises 1239 residues: DNA topoisomerase 2 (1239 aa).

ATP-binding positions include Asn-65, Asn-96, 124–126 (SSN), 137–144 (GRHGYGAK), and 354–356 (QSK). The Toprim domain maps to 434-548 (RTLIVTEGDS…SLLQHNPGYI (115 aa)). Positions 440, 517, and 519 each coordinate Mg(2+). The 417-residue stretch at 685–1101 (IPHCVDGLKP…TPVKMWLTDL (417 aa)) folds into the Topo IIA-type catalytic domain. Tyr-775 (O-(5'-phospho-DNA)-tyrosine intermediate) is an active-site residue. The tract at residues 956-965 (ALSQRIYING) is interaction with DNA. A disordered region spans residues 1167–1206 (PASKRKPEDTYGGALSSGGSTRNVGKRLTGARGAKKKKVV).

The protein belongs to the type II topoisomerase family. Homodimer. The cofactor is Mg(2+). Mn(2+) is required as a cofactor. It depends on Ca(2+) as a cofactor.

The protein localises to the nucleus. It localises to the mitochondrion matrix. Its subcellular location is the kinetoplast. The catalysed reaction is ATP-dependent breakage, passage and rejoining of double-stranded DNA.. Control of topological states of DNA by transient breakage and subsequent rejoining of DNA strands. Topoisomerase II makes double-strand breaks. The chain is DNA topoisomerase 2 (TOP2) from Crithidia fasciculata.